The primary structure comprises 233 residues: Orotidine 5'-phosphate decarboxylase (233 aa).

Substrate is bound by residues aspartate 11, lysine 33, 60–69 (DLKFHDIPNT), threonine 120, arginine 181, glutamine 190, glycine 210, and arginine 211. Lysine 62 (proton donor) is an active-site residue.

This sequence belongs to the OMP decarboxylase family. Type 1 subfamily. As to quaternary structure, homodimer.

The enzyme catalyses orotidine 5'-phosphate + H(+) = UMP + CO2. The protein operates within pyrimidine metabolism; UMP biosynthesis via de novo pathway; UMP from orotate: step 2/2. In terms of biological role, catalyzes the decarboxylation of orotidine 5'-monophosphate (OMP) to uridine 5'-monophosphate (UMP). The polypeptide is Orotidine 5'-phosphate decarboxylase (Vibrio campbellii (strain ATCC BAA-1116)).